Reading from the N-terminus, the 582-residue chain is Leucine-rich repeat transmembrane neuronal protein 3 (582 aa).

The signal sequence occupies residues Met1 to Ala30. The region spanning Glu31–Ala61 is the LRRNT domain. Residues Glu31–Lys420 lie on the Extracellular side of the membrane. LRR repeat units lie at residues Cys63–Gly83, Gln86–Gly107, Arg110–Pro131, Asn134–Gly155, Lys158–Asp179, Asn182–Gly203, Arg206–Pro226, Ser230–Thr251, Ser254–Gln275, and Asn279–Ser300. Residue Asn126 is glycosylated (N-linked (GlcNAc...) asparagine). Positions Asn312–Lys363 constitute an LRRCT domain. Asn357 carries an N-linked (GlcNAc...) asparagine glycan. The interval Lys378 to Asp410 is disordered. The chain crosses the membrane as a helical span at residues Ile421 to Val441. At Ser442–Ala582 the chain is on the cytoplasmic side.

The protein belongs to the LRRTM family. In terms of tissue distribution, expressed in neuronal tissues.

It localises to the cell membrane. Its subcellular location is the postsynaptic cell membrane. In terms of biological role, may play a role in the development and maintenance of the vertebrate nervous system. Exhibits a limited synaptogenic activity in vitro, restricted to excitatory presynaptic differentiation. The chain is Leucine-rich repeat transmembrane neuronal protein 3 (Lrrtm3) from Mus musculus (Mouse).